We begin with the raw amino-acid sequence, 113 residues long: MPPVLWRGWIPFCRCTEEKKVRNKQVVLLIAGISGIVTGIIVSLNIPFIRQGLFYPASPVEIVVSLSLTFSVSVVFFVGAIVGWISVSEIYYSRMTGLNESSEISEGTYNERK.

In Escherichia coli (strain K12), this protein is Protein TrbJ (trbJ).